A 285-amino-acid polypeptide reads, in one-letter code: Putative sugar uptake protein lp_2503 (285 aa).

The next 9 membrane-spanning stretches (helical) occupy residues 2–21 (GILI…LISG), 31–48 (TLGM…LWAV), 55–72 (SKIW…SIGQ), 112–134 (GNMY…LTSL), 147–169 (NWGV…TIVV), 179–196 (VVMP…IWSF), 209–228 (NIVT…MAMA), 233–255 (AVAY…YLLG), and 264–283 (VYVV…LSLM).

This sequence belongs to the GRP transporter (TC 2.A.7.5) family.

It is found in the cell membrane. This Lactiplantibacillus plantarum (strain ATCC BAA-793 / NCIMB 8826 / WCFS1) (Lactobacillus plantarum) protein is Putative sugar uptake protein lp_2503.